Reading from the N-terminus, the 187-residue chain is Putative glutathione-dependent formaldehyde-activating enzyme (187 aa).

The CENP-V/GFA domain maps to 20-166 (FPGGKLYCHC…FESVGLKTYD (147 aa)). Residues Cys-27, Cys-29, Cys-48, Cys-50, Cys-53, Cys-95, and Cys-98 each contribute to the Zn(2+) site.

Belongs to the Gfa family. Requires Zn(2+) as cofactor.

The enzyme catalyses S-(hydroxymethyl)glutathione = glutathione + formaldehyde. It functions in the pathway one-carbon metabolism; formaldehyde degradation; formate from formaldehyde (glutathione route): step 1/3. Its function is as follows. Catalyzes the condensation of formaldehyde and glutathione to S-hydroxymethylglutathione. This chain is Putative glutathione-dependent formaldehyde-activating enzyme, found in Talaromyces marneffei (strain ATCC 18224 / CBS 334.59 / QM 7333) (Penicillium marneffei).